Here is a 789-residue protein sequence, read N- to C-terminus: Tax1-binding protein 1 (789 aa).

Phosphoserine occurs at positions 124, 138, and 225. A coiled-coil region spans residues 144-599 (TTKAGLLELK…LKRSLENPAE (456 aa)). The interval 320-420 (EEIGRLQLCL…ELKLNAMKKD (101 aa)) is oligomerization. Residues 481-502 (TGNQQKVNDASVNTDPATSAST) are compositionally biased toward polar residues. The tract at residues 481-508 (TGNQQKVNDASVNTDPATSASTVDVKPS) is disordered. The residue at position 593 (serine 593) is a Phosphoserine; by IKKA. The residue at position 609 (serine 609) is a Phosphoserine. Residues 639–660 (YASQETRDGADGAFYPDEIQRP) form a disordered region. Residue serine 666 is modified to Phosphoserine; by IKKA. Positions 678 to 712 (PARNFSRPDGLEDSEDSKEDENVPTAPDPPSQHLR) are disordered. 2 consecutive UBZ1-type zinc fingers follow at residues 727–753 (HKKC…VESH) and 754–780 (WKVC…VQTH). Positions 730, 733, 749, 753, 757, 760, 776, and 780 each coordinate Zn(2+).

As to quaternary structure, homooligomer. Interacts with TNFAIP3. Interacts with STARD13. Interacts with MYO6. Interacts with TOM1; the interaction is indirect and is mediated by MYO6, which acts as a bridge between TOM1 and TAX1BP1. Interacts with MAVS; this interaction induces MAVS polyubiquitination. Interacts with TNIP1. Interacts with TRAF6; this interaction mediates deubiquitination of TRAF6 and inhibition of NF-kappa-B activation. Interacts with RIPK1; this interaction negatively regulates RIPK1 ubiquitination. Interacts with NBR1. Interacts with TBK1. Interacts with RB1CC1. Interacts with SQSTM1. Interacts with AZI2. Interacts with TICAM1 and TRIM32; these interactions target TICAM1 to TAX1BP1-mediated selective autophagic degradation. (Microbial infection) Interacts with the HTLV-1 protein Tax. In terms of assembly, (Microbial infection) Interacts with Respiratory syncytial virus protein N; this interaction may promote viral growth by inhibiting the innate immune response. As to quaternary structure, (Microbial infection) Interacts with Lassa virus protein Z. (Microbial infection) Interacts with Mopeia virus protein Z. In terms of processing, phosphorylated in the C-terminal region by CHUK/IKKA leading to NF-kappa-B signaling down-regulation. As to expression, expressed in all tissues tested.

The protein resides in the cytoplasm. It localises to the mitochondrion. It is found in the preautophagosomal structure. The protein localises to the cytoplasmic vesicle. Its subcellular location is the autophagosome. In terms of biological role, ubiquitin-binding adapter that participates in inflammatory, antiviral and innate immune processes as well as selective autophagy regulation. Plays a key role in the negative regulation of NF-kappa-B and IRF3 signalings by acting as an adapter for the ubiquitin-editing enzyme A20/TNFAIP3 to bind and inactivate its substrates. Disrupts the interactions between the E3 ubiquitin ligase TRAF3 and TBK1/IKBKE to attenuate 'Lys63'-linked polyubiquitination of TBK1 and thereby IFN-beta production. Also recruits A20/TNFAIP3 to ubiquitinated signaling proteins TRAF6 and RIPK1, leading to their deubiquitination and disruption of IL-1 and TNF-induced NF-kappa-B signaling pathways. Inhibits virus-induced apoptosis by inducing the 'Lys-48'-linked polyubiquitination and degradation of MAVS via recruitment of the E3 ligase ITCH, thereby attenuating MAVS-mediated apoptosis signaling. As a macroautophagy/autophagy receptor, facilitates the xenophagic clearance of pathogenic bacteria such as Salmonella typhimurium and Mycobacterium tuberculosis. Upon NBR1 recruitment to the SQSTM1-ubiquitin condensates, acts as the major recruiter of RB1CC1 to these ubiquitin condensates to promote their autophagic degradation. Mediates the autophagic degradation of other substrates including TICAM1. This is Tax1-binding protein 1 (TAX1BP1) from Homo sapiens (Human).